We begin with the raw amino-acid sequence, 357 residues long: UDP-N-acetylglucosamine--N-acetylmuramyl-(pentapeptide) pyrophosphoryl-undecaprenol N-acetylglucosamine transferase (357 aa).

Residues 11–13 (TGG), Asn-120, Arg-161, Ser-188, and Gln-281 contribute to the UDP-N-acetyl-alpha-D-glucosamine site.

The protein belongs to the glycosyltransferase 28 family. MurG subfamily.

The protein resides in the cell inner membrane. The catalysed reaction is di-trans,octa-cis-undecaprenyl diphospho-N-acetyl-alpha-D-muramoyl-L-alanyl-D-glutamyl-meso-2,6-diaminopimeloyl-D-alanyl-D-alanine + UDP-N-acetyl-alpha-D-glucosamine = di-trans,octa-cis-undecaprenyl diphospho-[N-acetyl-alpha-D-glucosaminyl-(1-&gt;4)]-N-acetyl-alpha-D-muramoyl-L-alanyl-D-glutamyl-meso-2,6-diaminopimeloyl-D-alanyl-D-alanine + UDP + H(+). It participates in cell wall biogenesis; peptidoglycan biosynthesis. Cell wall formation. Catalyzes the transfer of a GlcNAc subunit on undecaprenyl-pyrophosphoryl-MurNAc-pentapeptide (lipid intermediate I) to form undecaprenyl-pyrophosphoryl-MurNAc-(pentapeptide)GlcNAc (lipid intermediate II). This chain is UDP-N-acetylglucosamine--N-acetylmuramyl-(pentapeptide) pyrophosphoryl-undecaprenol N-acetylglucosamine transferase, found in Prochlorococcus marinus (strain SARG / CCMP1375 / SS120).